We begin with the raw amino-acid sequence, 594 residues long: MTTGSALYIPPYKADDQDVVVELNNRFGAEAFTAQPTRTGMPVLWVARAKLVEVLTFLRNLPKPYVMLYDLHGVDERLRTKRQGLPSGADFTVFYHLMSLERNSDVMIKVALSESDLSLPTVTSIWPNANWYEREVWDMYGIDFKGHPHLSRIMMPPTWEGHPLRKDFPARATEFDPFSLNLAKQQLEEEAARFRPEDWGMKRSGANEDYMFLNLGPNHPSAHGAFRIILQLDGEEIVDCVPDIGYHHRGAEKMAERQSWHSFIPYTDRIDYLGGVMNNLPYVLSVEKLAGIKVPEKVDVIRIMMAEFFRITSHLLFLGTYIQDVGAMTPVFFTFTDRQKAYTVIEAITGFRLHPAWYRIGGVAHDLPRGWEKLVKDFVEWLPKRLDEYTKAALQNSILKGRTIGVAQYNTKEALEWGVTGAGLRSTGCDFDLRKARPYSGYENFEFEVPLAANGDAYDRCMVRVEEMRQSVKIIDQCLRNMPEGPYKADHPLTTPPPKERTLQHIETLITHFLQVSWGPVMPANESFQMIEATKGINSYYLTSDGGTMSYRTRIRTPSFAHLQQIPSVIKGSMVADLIAYLGSIDFVMADVDR.

The segment at 1–185 is NADH dehydrogenase I subunit C; sequence MTTGSALYIP…DPFSLNLAKQ (185 aa). Positions 209-594 are NADH dehydrogenase I subunit D; it reads DYMFLNLGPN…IDFVMADVDR (386 aa).

In the N-terminal section; belongs to the complex I 30 kDa subunit family. The protein in the C-terminal section; belongs to the complex I 49 kDa subunit family. NDH-1 is composed of 13 different subunits. Subunits NuoB, CD, E, F, and G constitute the peripheral sector of the complex.

It localises to the cell inner membrane. It catalyses the reaction a quinone + NADH + 5 H(+)(in) = a quinol + NAD(+) + 4 H(+)(out). Its function is as follows. NDH-1 shuttles electrons from NADH, via FMN and iron-sulfur (Fe-S) centers, to quinones in the respiratory chain. The immediate electron acceptor for the enzyme in this species is believed to be ubiquinone. Couples the redox reaction to proton translocation (for every two electrons transferred, four hydrogen ions are translocated across the cytoplasmic membrane), and thus conserves the redox energy in a proton gradient. This is NADH-quinone oxidoreductase subunit C/D from Pseudomonas fluorescens (strain Pf0-1).